The chain runs to 427 residues: Enolase (427 aa).

Glutamine 163 provides a ligand contact to (2R)-2-phosphoglycerate. Glutamate 205 (proton donor) is an active-site residue. Residues aspartate 242, glutamate 285, and aspartate 312 each contribute to the Mg(2+) site. Residues lysine 337, arginine 366, serine 367, and lysine 388 each contribute to the (2R)-2-phosphoglycerate site. Lysine 337 (proton acceptor) is an active-site residue.

This sequence belongs to the enolase family. It depends on Mg(2+) as a cofactor.

The protein localises to the cytoplasm. It localises to the secreted. The protein resides in the cell surface. The enzyme catalyses (2R)-2-phosphoglycerate = phosphoenolpyruvate + H2O. It functions in the pathway carbohydrate degradation; glycolysis; pyruvate from D-glyceraldehyde 3-phosphate: step 4/5. In terms of biological role, catalyzes the reversible conversion of 2-phosphoglycerate (2-PG) into phosphoenolpyruvate (PEP). It is essential for the degradation of carbohydrates via glycolysis. The protein is Enolase of Paraburkholderia phytofirmans (strain DSM 17436 / LMG 22146 / PsJN) (Burkholderia phytofirmans).